The sequence spans 396 residues: Flavohemoprotein (396 aa).

Residues 1–136 enclose the Globin domain; that stretch reads MLDNQTIATV…LADIFINREE (136 aa). His85 serves as a coordination point for heme b. Catalysis depends on charge relay system residues Tyr95 and Glu135. A reductase region spans residues 147 to 396; that stretch reads GGWRGLRPFR…YECFGPHKVI (250 aa). The FAD-binding FR-type domain maps to 150-255; that stretch reads RGLRPFRINR…TAPRGDFFLD (106 aa). FAD contacts are provided by residues Tyr188 and 204 to 207; that span reads RQYS. NADP(+) is bound at residue 268 to 273; the sequence is GVGLTP. 389–392 lines the FAD pocket; it reads CFGP.

The protein belongs to the globin family. Two-domain flavohemoproteins subfamily. This sequence in the C-terminal section; belongs to the flavoprotein pyridine nucleotide cytochrome reductase family. The cofactor is heme b. It depends on FAD as a cofactor.

It catalyses the reaction 2 nitric oxide + NADPH + 2 O2 = 2 nitrate + NADP(+) + H(+). It carries out the reaction 2 nitric oxide + NADH + 2 O2 = 2 nitrate + NAD(+) + H(+). Its function is as follows. Is involved in NO detoxification in an aerobic process, termed nitric oxide dioxygenase (NOD) reaction that utilizes O(2) and NAD(P)H to convert NO to nitrate, which protects the bacterium from various noxious nitrogen compounds. Therefore, plays a central role in the inducible response to nitrosative stress. The sequence is that of Flavohemoprotein from Photorhabdus laumondii subsp. laumondii (strain DSM 15139 / CIP 105565 / TT01) (Photorhabdus luminescens subsp. laumondii).